The primary structure comprises 182 residues: ADP-ribosylation factor 1 (182 aa).

Glycine 2 is lipidated: N-myristoyl glycine. The important for the stable binding to the membranes stretch occupies residues 3-16 (NVFANLFKGLFGKK). GTP is bound by residues 24–32 (GLDAAGKTT), 126–129 (NKQD), and alanine 160.

Belongs to the small GTPase superfamily. Arf family.

The protein localises to the golgi apparatus membrane. The protein resides in the cytoplasm. Its subcellular location is the cytosol. The enzyme catalyses GTP + H2O = GDP + phosphate + H(+). Alternates between an inactive GDP-bound form and an active GTP-bound form. Activated by a guanine nucleotide-exchange factor (GEF) and inactivated by GTPase-activating protein (GAP). Small GTPase involved in protein trafficking between different compartments. Modulates vesicle budding and uncoating within the Golgi complex. In its GTP-bound form, triggers the recruitment of coatomer proteins to the Golgi membrane. The hydrolysis of ARF1-bound GTP, which is mediated by ARFGAPs proteins, is required for dissociation of coat proteins from Golgi membranes and vesicles. Has a role in eye development. Required for cleavage furrow ingression in embryonic cells. This Drosophila melanogaster (Fruit fly) protein is ADP-ribosylation factor 1.